The primary structure comprises 106 residues: MSKKNDWLDFDQLAEDKVRDALKPPSMYKVMLMNDDYTPMEFVIDVLQKFFSYDVERATQLMLTVHYRGKAICGIFTAEVAETKVAMVNEYARENEHPLLCTLEKA.

Belongs to the ClpS family. As to quaternary structure, binds to the N-terminal domain of the chaperone ClpA.

In terms of biological role, involved in the modulation of the specificity of the ClpAP-mediated ATP-dependent protein degradation. The sequence is that of ATP-dependent Clp protease adapter protein ClpS from Enterobacter sp. (strain 638).